Here is a 594-residue protein sequence, read N- to C-terminus: Putative diflavin flavoprotein A 4 (594 aa).

The tract at residues 57-250 (RRGTTSNSYL…LTLKMIAPGH (194 aa)) is zinc metallo-hydrolase. Residues 279–417 (VALIYASAYG…VCTTSGANFA (139 aa)) enclose the Flavodoxin-like domain. Residues 445–594 (VGRIIGSIGV…IRHRKSGGQY (150 aa)) form a flavodoxin-reductase-like region.

The protein in the N-terminal section; belongs to the zinc metallo-hydrolase group 3 family. In the C-terminal section; belongs to the flavodoxin reductase family. Fe cation serves as cofactor.

Mediates electron transfer from NADH to oxygen, reducing it to water. This modular protein has 3 redox cofactors, in other organisms the same activity requires 2 or 3 proteins. In Synechocystis sp. (strain ATCC 27184 / PCC 6803 / Kazusa), this protein is Putative diflavin flavoprotein A 4 (dfa4).